The chain runs to 245 residues: Glycerophosphodiester phosphodiesterase (245 aa).

The 240-residue stretch at 2–241 folds into the GP-PDE domain; that stretch reads TKIFAHRGFK…DFPDRAVKIR (240 aa). The active-site Proton acceptor is His7. A divalent metal cation contacts are provided by Glu34 and Asp36. The Proton donor role is filled by His49. Glu110 contributes to the a divalent metal cation binding site.

The protein belongs to the glycerophosphoryl diester phosphodiesterase family. Ni(2+) serves as cofactor. Co(2+) is required as a cofactor. The cofactor is Mn(2+).

The catalysed reaction is a sn-glycero-3-phosphodiester + H2O = an alcohol + sn-glycerol 3-phosphate + H(+). Its activity is regulated as follows. Inhibited by EDTA and various organic solvents such as chloroform, toluene or benzene. Functionally, glycerophosphodiester phosphodiesterase hydrolyzes glycerophosphodiesters into glycerol-3-phosphate (G3P) and the corresponding alcohol. Can hydrolyze the model substrate bis-(p-nitrophenyl phosphate) (bis(pNPP)) to p-nitrophenol. Can also catalyze the degradation of diphenyl phosphate (DPHP) to phenyl phosphate (PHP). DPHP is an aryl phosphate ester used as a chemical additive and an industrial catalyst that can easily spread to the environment and exhibits toxicity toward organisms. The sequence is that of Glycerophosphodiester phosphodiesterase from Bacillus altitudinis.